The sequence spans 283 residues: Probable endonuclease 4 (283 aa).

Zn(2+)-binding residues include histidine 67, histidine 107, glutamate 144, aspartate 178, histidine 181, histidine 215, aspartate 228, histidine 230, and glutamate 260.

This sequence belongs to the AP endonuclease 2 family. Zn(2+) is required as a cofactor.

It catalyses the reaction Endonucleolytic cleavage to 5'-phosphooligonucleotide end-products.. Functionally, endonuclease IV plays a role in DNA repair. It cleaves phosphodiester bonds at apurinic or apyrimidinic (AP) sites, generating a 3'-hydroxyl group and a 5'-terminal sugar phosphate. The protein is Probable endonuclease 4 of Geobacter sp. (strain M21).